Reading from the N-terminus, the 324-residue chain is Coproporphyrin III ferrochelatase (324 aa).

Fe(2+)-binding residues include His184 and Glu266.

It belongs to the ferrochelatase family.

The protein localises to the cytoplasm. The catalysed reaction is Fe-coproporphyrin III + 2 H(+) = coproporphyrin III + Fe(2+). It participates in porphyrin-containing compound metabolism; protoheme biosynthesis. Its function is as follows. Involved in coproporphyrin-dependent heme b biosynthesis. Catalyzes the insertion of ferrous iron into coproporphyrin III to form Fe-coproporphyrin III. This Lactiplantibacillus plantarum (strain ATCC BAA-793 / NCIMB 8826 / WCFS1) (Lactobacillus plantarum) protein is Coproporphyrin III ferrochelatase.